The following is a 284-amino-acid chain: Tropomyosin (284 aa).

Residues 1–273 are a coiled coil; the sequence is MDAIKKKMVA…KEKYKAISDE (273 aa). Residues 110 to 130 are compositionally biased toward basic and acidic residues; that stretch reads SGKLEEASKAADESERNRKVL. Residues 110-134 form a disordered region; the sequence is SGKLEEASKAADESERNRKVLENLN.

Belongs to the tropomyosin family. As to quaternary structure, homodimer.

Functionally, tropomyosin, in association with the troponin complex, plays a central role in the calcium dependent regulation of muscle contraction. This Perna viridis (Asian green mussel) protein is Tropomyosin.